A 217-amino-acid chain; its full sequence is MNQTLLSDFGTPVERVERALEALRNGRGVMVLDDENRENEGDMIFAAETMTVEQMALTIRHGSGIVCLCLTEERRQQLELPMMVTNNSSQFQTAFTVTIEAAQGVTTGVSASDRLTTIRAAVADNAKPSDLNRPGHVFPLRAQPGGVLSRRGHTEATIDLVSMAGFKPAGVLCELTNDDGSMAHAPEVILFAKQHDMTVLTIEDLVAYRQAHEQKAS.

D-ribulose 5-phosphate is bound by residues 37-38, Asp42, 150-154, and Glu174; these read RE and RRGHT. Glu38 serves as a coordination point for Mg(2+). Residue His153 participates in Mg(2+) binding.

This sequence belongs to the DHBP synthase family. Homodimer. It depends on Mg(2+) as a cofactor. The cofactor is Mn(2+).

The enzyme catalyses D-ribulose 5-phosphate = (2S)-2-hydroxy-3-oxobutyl phosphate + formate + H(+). The protein operates within cofactor biosynthesis; riboflavin biosynthesis; 2-hydroxy-3-oxobutyl phosphate from D-ribulose 5-phosphate: step 1/1. In terms of biological role, catalyzes the conversion of D-ribulose 5-phosphate to formate and 3,4-dihydroxy-2-butanone 4-phosphate. This Serratia proteamaculans (strain 568) protein is 3,4-dihydroxy-2-butanone 4-phosphate synthase.